We begin with the raw amino-acid sequence, 44 residues long: Photosystem I reaction center subunit IX (44 aa).

A helical membrane pass occupies residues 7–27 (YLSVAPVLSTLSLGFFAGFLI).

It belongs to the PsaJ family.

Its subcellular location is the plastid membrane. May help in the organization of the PsaE and PsaF subunits. This chain is Photosystem I reaction center subunit IX, found in Cuscuta obtusiflora (Peruvian dodder).